A 344-amino-acid chain; its full sequence is Aspartate-semialdehyde dehydrogenase (344 aa).

Residues 10–13 (TGQV) and 38–39 (RS) contribute to the NADP(+) site. Arg-101 contacts phosphate. Cys-131 serves as the catalytic Acyl-thioester intermediate. Gln-158 provides a ligand contact to substrate. Residue 161 to 162 (SG) participates in NADP(+) binding. Lys-228 provides a ligand contact to phosphate. Arg-250 lines the substrate pocket. His-257 (proton acceptor) is an active-site residue. NADP(+) is bound at residue Asn-326.

The protein belongs to the aspartate-semialdehyde dehydrogenase family. As to quaternary structure, homodimer.

It catalyses the reaction L-aspartate 4-semialdehyde + phosphate + NADP(+) = 4-phospho-L-aspartate + NADPH + H(+). The protein operates within amino-acid biosynthesis; L-lysine biosynthesis via DAP pathway; (S)-tetrahydrodipicolinate from L-aspartate: step 2/4. Its pathway is amino-acid biosynthesis; L-methionine biosynthesis via de novo pathway; L-homoserine from L-aspartate: step 2/3. It functions in the pathway amino-acid biosynthesis; L-threonine biosynthesis; L-threonine from L-aspartate: step 2/5. Functionally, catalyzes the NADPH-dependent formation of L-aspartate-semialdehyde (L-ASA) by the reductive dephosphorylation of L-aspartyl-4-phosphate. This is Aspartate-semialdehyde dehydrogenase from Corynebacterium melassecola.